The following is a 532-amino-acid chain: MNKNMLVRSARPTLASIHRLFSAAAAATVDTATAPVVKPRSGGGKGGESANKKETVVGGRDTLGGRLLSLVYTKRSAVVTIRKWKEEGHSVRKYELNRIVRELRKIKRYKHALEICEWMVVQEDIKLQAGDYAVHLDLISKIRGLNSAEKFFEDMPDQMRGHAACTSLLHSYVQNKLSDKAEALFEKMGECGFLKSCLPYNHMLSMYISRGQFEKVPVLIKELKIRTSPDIVTYNLWLTAFASGNDVEGAEKVYLKAKEEKLNPDWVTYSVLTNLYAKTDNVEKARLALKEMEKLVSKKNRVAYASLISLHANLGDKDGVNLTWKKVKSSFKKMNDAEYLSMISAVVKLGEFEQAKGLYDEWESVSGTGDARIPNLILAEYMNRDEVLLGEKFYERIVEKGINPSYSTWEILTWAYLKRKDMEKVLDCFGKAIDSVKKWTVNVRLVKGACKELEEQGNVKGAEKLMTLLQKAGYVNTQLYNSLLRTYAKAGEMALIVEERMAKDNVELDEETKELIRLTSQMRVTEISSTIS.

The transit peptide at 1-28 (MNKNMLVRSARPTLASIHRLFSAAAAAT) directs the protein to the mitochondrion. The interval 35 to 56 (PVVKPRSGGGKGGESANKKETV) is disordered. PPR repeat units lie at residues 161–195 (GHAACTSLLHSYVQNKLSDKAEALFEKMGECGFLK), 196–226 (SCLPYNHMLSMYISRGQFEKVPVLIKELKIR), 230–264 (DIVTYNLWLTAFASGNDVEGAEKVYLKAKEEKLNP), 265–295 (DWVTYSVLTNLYAKTDNVEKARLALKEMEKL), 300–330 (NRVAYASLISLHANLGDKDGVNLTWKKVKSS), 335–365 (NDAEYLSMISAVVKLGEFEQAKGLYDEWESV), 370–404 (DARIPNLILAEYMNRDEVLLGEKFYERIVEKGINP), 405–435 (SYSTWEILTWAYLKRKDMEKVLDCFGKAIDS), 442–472 (NVRLVKGACKELEEQGNVKGAEKLMTLLQKA), and 476–512 (NTQLYNSLLRTYAKAGEMALIVEERMAKDNVELDEET).

The protein belongs to the PPR family. P subfamily.

It localises to the mitochondrion. This Arabidopsis thaliana (Mouse-ear cress) protein is Pentatricopeptide repeat-containing protein At4g02820, mitochondrial.